Here is a 140-residue protein sequence, read N- to C-terminus: Resuscitation-promoting factor RpfC (140 aa).

An N-terminal signal peptide occupies residues 1-31 (MTRIAKPLIKSAMAAGLVTASMSLSTAVAHA).

It belongs to the transglycosylase family. Rpf subfamily.

It is found in the secreted. Functionally, factor that stimulates resuscitation of dormant cells. Has peptidoglycan (PG) hydrolytic activity. This chain is Resuscitation-promoting factor RpfC (rpfC), found in Mycobacterium tuberculosis (strain ATCC 35801 / TMC 107 / Erdman).